The chain runs to 158 residues: Protein EOLA1 (158 aa).

Residues 6 to 92 (LSFRQPYAGF…IAGLVDIGET (87 aa)) enclose the ASCH domain.

This sequence belongs to the EOLA family. In terms of assembly, interacts with MT2A. As to expression, expressed primarily in heart, skeletal muscle, kidney, liver and placenta. Relatively high level of expression in spleen, colon and small intestine. Almost no expression in brain, thymus, lung and peripheral blood leukocytes. Expressed in epithelial cells (at protein level).

Its function is as follows. May play a role in cell protection during the inflammatory response. In epithelial cells, negatively regulates IL6 production and apoptosis through the regulation of MT2A expression. This Homo sapiens (Human) protein is Protein EOLA1.